The following is a 154-amino-acid chain: Putative pre-16S rRNA nuclease (154 aa).

The protein belongs to the YqgF nuclease family.

Its subcellular location is the cytoplasm. In terms of biological role, could be a nuclease involved in processing of the 5'-end of pre-16S rRNA. The sequence is that of Putative pre-16S rRNA nuclease from Rickettsia conorii (strain ATCC VR-613 / Malish 7).